Consider the following 161-residue polypeptide: Efficient mitochondria targeting-associated protein 19 (161 aa).

Residues 1–10 (MKLGHREQQF) lie on the Cytoplasmic side of the membrane. An EXPERA domain is found at 7–159 (EQQFYLWYFI…PTFLIPLRLC (153 aa)). Residues 11–31 (YLWYFIVHIPITIFIDSSVVI) form a helical membrane-spanning segment. The Lumenal portion of the chain corresponds to 32–61 (PAKWQLGIAQKVVSDHIAKQHDFLLSEKPE). A helical transmembrane segment spans residues 62–82 (WLYWFVVLELVLQLPLFVYFV). Residues 83–101 (NKFWNSSELQVNTNSRLKK) lie on the Cytoplasmic side of the membrane. Residues 102 to 122 (WLRIYGWNASLTTLICIVVIF) traverse the membrane as a helical segment. Over 123–141 (KRGYIPYDVLKTSLSMTQK) the chain is Lumenal. A helical membrane pass occupies residues 142 to 160 (CQLASVYLPTFLIPLRLCF). A topological domain (cytoplasmic) is located at residue Val-161.

It belongs to the TMEM97/sigma-2 receptor family.

Its subcellular location is the endoplasmic reticulum membrane. Functionally, part of an import route for newly synthesized mitochondrial proteins termed the ER-SURF pathway (ER surface-mediated protein targeting), which retrieves mitochondrial precursor proteins from the ER surface and reroutes them to mitochondria for efficient mitochondrial import. Acts as a quality control factor in the ER, promoting the proteolytic degradation of nonproductive and extramitochondrial precursor proteins in the ER membrane thus removing them from the ER surface. This is Efficient mitochondria targeting-associated protein 19 from Saccharomyces cerevisiae (strain ATCC 204508 / S288c) (Baker's yeast).